The chain runs to 372 residues: 4-hydroxybenzoate polyprenyltransferase, mitochondrial (372 aa).

The N-terminal 42 residues, 1 to 42 (MFIWQRKSILLGRSILGSGRVTVAGIIGSSRKRYTSSSSSSS), are a transit peptide targeting the mitochondrion. 7 helical membrane passes run 92 to 112 (PVGT…GAMM), 114 to 134 (GATL…ALVM), 171 to 191 (ALVF…LLPA), 193 to 213 (CWWL…FKRF), 229 to 249 (ALLG…PLYL), 298 to 318 (IALL…GFIG), and 352 to 372 (TGLY…FGFL).

Belongs to the UbiA prenyltransferase family. The cofactor is Mg(2+).

The protein resides in the mitochondrion inner membrane. The enzyme catalyses an all-trans-polyprenyl diphosphate + 4-hydroxybenzoate = a 4-hydroxy-3-(all-trans-polyprenyl)benzoate + diphosphate. Its pathway is cofactor biosynthesis; ubiquinone biosynthesis. Functionally, catalyzes the prenylation of para-hydroxybenzoate (PHB) with an all-trans polyprenyl group. Mediates the second step in the final reaction sequence of coenzyme Q (CoQ) biosynthesis, which is the condensation of the polyisoprenoid side chain with PHB, generating the first membrane-bound Q intermediate. This Saccharomyces cerevisiae (strain ATCC 204508 / S288c) (Baker's yeast) protein is 4-hydroxybenzoate polyprenyltransferase, mitochondrial.